A 563-amino-acid polypeptide reads, in one-letter code: Arginine--tRNA ligase (563 aa).

The 'HIGH' region motif lies at 121-131; it reads PNIAKPFSIGH.

Belongs to the class-I aminoacyl-tRNA synthetase family. Monomer.

The protein resides in the cytoplasm. The catalysed reaction is tRNA(Arg) + L-arginine + ATP = L-arginyl-tRNA(Arg) + AMP + diphosphate. This Streptococcus pneumoniae (strain Taiwan19F-14) protein is Arginine--tRNA ligase.